The following is a 345-amino-acid chain: Heat-inducible transcription repressor HrcA (345 aa).

The protein belongs to the HrcA family.

Functionally, negative regulator of class I heat shock genes (grpE-dnaK-dnaJ and groELS operons). Prevents heat-shock induction of these operons. The chain is Heat-inducible transcription repressor HrcA from Tetragenococcus halophilus (Pediococcus halophilus).